The sequence spans 234 residues: Sugar fermentation stimulation protein A (234 aa).

Positions 201-220 form a DNA-binding region, H-T-H motif; it reads LLSEAQNKGVEVLAYKAELS.

It belongs to the SfsA family.

Its function is as follows. Binds to DNA non-specifically. Could be a regulatory factor involved in maltose metabolism. The protein is Sugar fermentation stimulation protein A of Salmonella arizonae (strain ATCC BAA-731 / CDC346-86 / RSK2980).